The primary structure comprises 271 residues: 3-methyl-2-oxobutanoate hydroxymethyltransferase (271 aa).

Mg(2+) is bound by residues Asp52 and Asp91. Residues 52 to 53, Asp91, and Lys121 each bind 3-methyl-2-oxobutanoate; that span reads DS. Mg(2+) is bound at residue Glu123. Catalysis depends on Glu189, which acts as the Proton acceptor.

Belongs to the PanB family. In terms of assembly, homodecamer; pentamer of dimers. It depends on Mg(2+) as a cofactor.

It localises to the cytoplasm. The enzyme catalyses 3-methyl-2-oxobutanoate + (6R)-5,10-methylene-5,6,7,8-tetrahydrofolate + H2O = 2-dehydropantoate + (6S)-5,6,7,8-tetrahydrofolate. It participates in cofactor biosynthesis; (R)-pantothenate biosynthesis; (R)-pantoate from 3-methyl-2-oxobutanoate: step 1/2. Catalyzes the reversible reaction in which hydroxymethyl group from 5,10-methylenetetrahydrofolate is transferred onto alpha-ketoisovalerate to form ketopantoate. The protein is 3-methyl-2-oxobutanoate hydroxymethyltransferase of Acidothermus cellulolyticus (strain ATCC 43068 / DSM 8971 / 11B).